An 816-amino-acid chain; its full sequence is Protein hunchback (816 aa).

Disordered regions lie at residues 33-92, 129-151, 165-185, and 197-229; these read LSHH…QPMD, QQHF…GGFN, YYGG…PTAV, and ALTP…LMSN. Composition is skewed to low complexity over residues 49 to 60, 79 to 89, and 129 to 139; these read SNSNSGASSPRQ, QQQQQQQQQQQ, and QQHFQAAQHQQ. At Thr199 the chain carries Phosphothreonine. Residues Ser209, Ser228, Ser230, and Ser231 each carry the phosphoserine modification. Residues 219–229 show a composition bias toward basic and acidic residues; it reads EPEKEHDLMSN. 4 consecutive C2H2-type zinc fingers follow at residues 261–283, 290–312, 318–340, and 346–364; these read YKCK…TRTH, LQCA…IRKH, FQCD…RKSH, and YRCA…FKLH. Disordered regions lie at residues 387-427, 536-612, and 679-734; these read VIDV…QQQQ, LQQQ…QLPH, and GSSA…SNPT. 2 stretches are compositionally biased toward low complexity: residues 399–427 and 536–560; these read SKSF…QQQQ and LQQQ…QQQQ. The span at 567–578 shows a compositional bias: acidic residues; sequence NEEDEEEEEHED. 2 positions are modified to phosphoserine: Ser584 and Ser587. Residues 712 to 734 show a composition bias toward low complexity; the sequence is SASSTASSSGNSSNASSSTSNPT. 2 consecutive C2H2-type zinc fingers follow at residues 763–785 and 791–815; these read YECK…MGYH and FKCN…RNAH.

This sequence belongs to the hunchback C2H2-type zinc-finger protein family.

The protein resides in the nucleus. In terms of biological role, gap class segmentation protein that controls development of head structures. This Drosophila virilis (Fruit fly) protein is Protein hunchback.